The sequence spans 116 residues: uncharacterized protein (116 aa).

The segment at 76–116 (VPPPRYSYIRSESSRNNLRNSARNQPQNLVSEQDSDSNREN) is disordered. Residues 85–99 (RSESSRNNLRNSARN) are compositionally biased toward low complexity.

This is an uncharacterized protein from Glycine max (Soybean).